The primary structure comprises 387 residues: Anhydro-N-acetylmuramic acid kinase (387 aa).

9–16 (GTSADGVD) lines the ATP pocket.

This sequence belongs to the anhydro-N-acetylmuramic acid kinase family.

It carries out the reaction 1,6-anhydro-N-acetyl-beta-muramate + ATP + H2O = N-acetyl-D-muramate 6-phosphate + ADP + H(+). Its pathway is amino-sugar metabolism; 1,6-anhydro-N-acetylmuramate degradation. The protein operates within cell wall biogenesis; peptidoglycan recycling. Its function is as follows. Catalyzes the specific phosphorylation of 1,6-anhydro-N-acetylmuramic acid (anhMurNAc) with the simultaneous cleavage of the 1,6-anhydro ring, generating MurNAc-6-P. Is required for the utilization of anhMurNAc either imported from the medium or derived from its own cell wall murein, and thus plays a role in cell wall recycling. In Synechococcus sp. (strain WH7803), this protein is Anhydro-N-acetylmuramic acid kinase.